The following is a 96-amino-acid chain: Co-chaperonin GroES (96 aa).

This sequence belongs to the GroES chaperonin family. As to quaternary structure, heptamer of 7 subunits arranged in a ring. Interacts with the chaperonin GroEL.

The protein localises to the cytoplasm. Functionally, together with the chaperonin GroEL, plays an essential role in assisting protein folding. The GroEL-GroES system forms a nano-cage that allows encapsulation of the non-native substrate proteins and provides a physical environment optimized to promote and accelerate protein folding. GroES binds to the apical surface of the GroEL ring, thereby capping the opening of the GroEL channel. This Streptococcus pyogenes serotype M18 (strain MGAS8232) protein is Co-chaperonin GroES.